Here is a 522-residue protein sequence, read N- to C-terminus: F-box/LRR-repeat protein 16 (522 aa).

The F-box domain maps to 38–84 (YDFTANLPDDCLAHIFQFLSAGDRKRCSLVSKRWLLVDGQNRHRLSL). LRR repeat units lie at residues 115–140 (SFSLSDEALFIVSIRCSNLIRVKLRG), 141–166 (CREITDLGMESFARNCKSLRKLSCGS), 169–191 (FGAKGINAMLEHCKVLEELSLKR), 266–290 (RLQVTDIGLFGISKCSNLETLHIVK), 291–316 (TPDCSNLGLASVVERCKLLRKLHIDG), 319–344 (VKRIGDQGLMSVAKHCLNLQELVLIG), 348–369 (TYMSLSAIASNCKKLERLALCG), 370–393 (SGTIGDAEIGCIAEKCVTLRKFCI), 395–420 (GCLISDVGVQALALGCPKLVKLKVKK), and 421–447 (CSLVTGEVREWLRERRMTLVVSMDDDE).

The protein is F-box/LRR-repeat protein 16 (FBL16) of Arabidopsis thaliana (Mouse-ear cress).